Consider the following 200-residue polypeptide: Small ribosomal subunit protein uS4 (200 aa).

The tract at residues 22–41 is disordered; that stretch reads TGKELQKRPYAPGQHGPNQR. In terms of domain architecture, S4 RNA-binding spans 92–152; sequence SRLDNLVYRM…EKSRNLQVIK (61 aa).

It belongs to the universal ribosomal protein uS4 family. In terms of assembly, part of the 30S ribosomal subunit. Contacts protein S5. The interaction surface between S4 and S5 is involved in control of translational fidelity.

One of the primary rRNA binding proteins, it binds directly to 16S rRNA where it nucleates assembly of the body of the 30S subunit. In terms of biological role, with S5 and S12 plays an important role in translational accuracy. The polypeptide is Small ribosomal subunit protein uS4 (Halalkalibacterium halodurans (strain ATCC BAA-125 / DSM 18197 / FERM 7344 / JCM 9153 / C-125) (Bacillus halodurans)).